Consider the following 498-residue polypeptide: Membrane-bound lytic murein transglycosylase F (498 aa).

The signal sequence occupies residues 1-29 (MFFKPDFRPRCAKWLIATGLFLMLGACVE). Residues 30–267 (KPTTLERVKE…RLKDRYYGHV (238 aa)) form a non-LT domain region. Residues 268–498 (DVLGYVGAYT…SSSSTDESPL (231 aa)) are LT domain. E314 is a catalytic residue. The segment at 464–498 (VADGNLHVPGVDKTQPPVPPASPVPSSSSTDESPL) is disordered.

The protein in the N-terminal section; belongs to the bacterial solute-binding protein 3 family. It in the C-terminal section; belongs to the transglycosylase Slt family.

Its subcellular location is the cell outer membrane. The catalysed reaction is Exolytic cleavage of the (1-&gt;4)-beta-glycosidic linkage between N-acetylmuramic acid (MurNAc) and N-acetylglucosamine (GlcNAc) residues in peptidoglycan, from either the reducing or the non-reducing ends of the peptidoglycan chains, with concomitant formation of a 1,6-anhydrobond in the MurNAc residue.. Murein-degrading enzyme that degrades murein glycan strands and insoluble, high-molecular weight murein sacculi, with the concomitant formation of a 1,6-anhydromuramoyl product. Lytic transglycosylases (LTs) play an integral role in the metabolism of the peptidoglycan (PG) sacculus. Their lytic action creates space within the PG sacculus to allow for its expansion as well as for the insertion of various structures such as secretion systems and flagella. This is Membrane-bound lytic murein transglycosylase F from Pseudomonas syringae pv. syringae (strain B728a).